Here is a 78-residue protein sequence, read N- to C-terminus: Exodeoxyribonuclease 7 small subunit (78 aa).

This sequence belongs to the XseB family. Heterooligomer composed of large and small subunits.

It localises to the cytoplasm. The enzyme catalyses Exonucleolytic cleavage in either 5'- to 3'- or 3'- to 5'-direction to yield nucleoside 5'-phosphates.. Its function is as follows. Bidirectionally degrades single-stranded DNA into large acid-insoluble oligonucleotides, which are then degraded further into small acid-soluble oligonucleotides. The chain is Exodeoxyribonuclease 7 small subunit from Finegoldia magna (strain ATCC 29328 / DSM 20472 / WAL 2508) (Peptostreptococcus magnus).